A 118-amino-acid chain; its full sequence is Ribulose bisphosphate carboxylase small subunit 2 (118 aa).

This sequence belongs to the RuBisCO small chain family. In terms of assembly, heterohexadecamer of 8 large and 8 small subunits.

Functionally, ruBisCO catalyzes two reactions: the carboxylation of D-ribulose 1,5-bisphosphate, the primary event in carbon dioxide fixation, as well as the oxidative fragmentation of the pentose substrate. Both reactions occur simultaneously and in competition at the same active site. Although the small subunit is not catalytic it is essential for maximal activity. The chain is Ribulose bisphosphate carboxylase small subunit 2 from Acidithiobacillus ferrooxidans (Thiobacillus ferrooxidans).